The chain runs to 254 residues: Arginine/ornithine transport ATP-binding protein AotP (254 aa).

The ABC transporter domain maps to 4–249; that stretch reads LEVQDLHKRY…PQSDRLKQFL (246 aa). 36–43 serves as a coordination point for ATP; it reads GSSGSGKS.

Belongs to the ABC transporter superfamily.

It localises to the cell inner membrane. In terms of biological role, part of the arginine-inducible binding-protein-dependent transport system for arginine and ornithine. Probably responsible for energy coupling to the transport system. The polypeptide is Arginine/ornithine transport ATP-binding protein AotP (aotP) (Pseudomonas aeruginosa (strain ATCC 15692 / DSM 22644 / CIP 104116 / JCM 14847 / LMG 12228 / 1C / PRS 101 / PAO1)).